A 694-amino-acid polypeptide reads, in one-letter code: Transcription activator of gluconeogenesis Pc22g08580 (694 aa).

Positions 1–61 are disordered; that stretch reads MNMETKNGSP…DPSRPRRKKA (61 aa). The span at 17-55 shows a compositional bias: basic and acidic residues; the sequence is SGERDSADITEHEQMDVKPKTNGDSKADRKAANAKDPSR. The segment at residues 65–93 is a DNA-binding region (zn(2)-C6 fungal-type); it reads CFACQRAHLTCGDERPCQRCIKRGLQDAC. Disordered regions lie at residues 126–240, 276–300, and 552–582; these read TLRN…GPFF, AAGD…AQFS, and TGGS…GTGR. Over residues 132 to 141 the composition is skewed to polar residues; the sequence is PISRNGTNAV. Positions 142–171 are enriched in low complexity; that stretch reads NSNQQHSQQHPQQPTNPTNNNFYPTPQTQT. 3 stretches are compositionally biased toward polar residues: residues 172–234, 281–300, and 552–581; these read GSYN…SQNP, PTDS…AQFS, and TGGS…SGTG.

Belongs to the ERT1/acuK family.

The protein localises to the nucleus. Transcription factor which regulates nonfermentable carbon utilization. Activator of gluconeogenetic genes. The polypeptide is Transcription activator of gluconeogenesis Pc22g08580 (Penicillium rubens (strain ATCC 28089 / DSM 1075 / NRRL 1951 / Wisconsin 54-1255) (Penicillium chrysogenum)).